The chain runs to 419 residues: MRKIVINGGLPLQGEITISGAKNSVVALIPAIILADDVVTLDCVPDISDVASLVEIMELMGATVKRYDDVLEIDPRGVQNIPMPYGKINSLRASYYFYGSLLGRFGEATVGLPGGCDLGPRPIDLHLKAFEAMGATASYEGDNMKLSAKDTGLHGASIYMDTVSVGATINTMIAAVKANGRTIIENAAREPEIIDVATLLNNMGAHIRGAGTNIIIIDGVERLHGTRHQVIPDRIEAGTYISLAAAVGKGIRINNVLYEHLEGFIAKLEEMGVRMTVSEDSIFVEEQSNLKAINIKTAPYPGFATDLQQPLTPLLLRANGRGTIVDTIYEKRVNHVFELAKMDADISTTNGHILYTGGRDLRGTSVKATDLRAGAALVIAGLMAEGKTEITNIEFILRGYSDIIEKLRNLGADIRLVED.

22–23 (KN) is a phosphoenolpyruvate binding site. Arginine 92 contacts UDP-N-acetyl-alpha-D-glucosamine. The active-site Proton donor is cysteine 116. Cysteine 116 carries the post-translational modification 2-(S-cysteinyl)pyruvic acid O-phosphothioketal. UDP-N-acetyl-alpha-D-glucosamine contacts are provided by residues 121 to 125 (RPIDL), aspartate 306, and isoleucine 328.

Belongs to the EPSP synthase family. MurA subfamily.

It is found in the cytoplasm. The enzyme catalyses phosphoenolpyruvate + UDP-N-acetyl-alpha-D-glucosamine = UDP-N-acetyl-3-O-(1-carboxyvinyl)-alpha-D-glucosamine + phosphate. It functions in the pathway cell wall biogenesis; peptidoglycan biosynthesis. Its function is as follows. Cell wall formation. Adds enolpyruvyl to UDP-N-acetylglucosamine. Target for the antibiotic fosfomycin. The protein is UDP-N-acetylglucosamine 1-carboxyvinyltransferase of Streptococcus pneumoniae (strain Hungary19A-6).